The sequence spans 400 residues: Serine/threonine transporter SstT (400 aa).

Helical transmembrane passes span 14–34, 48–68, 76–96, 136–156, 177–197, 211–231, 293–313, and 334–354; these read IIIA…VTPY, SVAP…FQVG, VLLL…IASL, AISE…GLAM, IIHK…AVTF, LLAV…PILV, LAGA…TLGI, and ASGV…LFGI.

It belongs to the dicarboxylate/amino acid:cation symporter (DAACS) (TC 2.A.23) family.

It is found in the cell inner membrane. It carries out the reaction L-serine(in) + Na(+)(in) = L-serine(out) + Na(+)(out). It catalyses the reaction L-threonine(in) + Na(+)(in) = L-threonine(out) + Na(+)(out). Its function is as follows. Involved in the import of serine and threonine into the cell, with the concomitant import of sodium (symport system). In Acinetobacter baumannii (strain SDF), this protein is Serine/threonine transporter SstT.